A 129-amino-acid polypeptide reads, in one-letter code: Small ribosomal subunit protein eS6 (129 aa).

Belongs to the eukaryotic ribosomal protein eS6 family.

The protein is Small ribosomal subunit protein eS6 of Archaeoglobus fulgidus (strain ATCC 49558 / DSM 4304 / JCM 9628 / NBRC 100126 / VC-16).